We begin with the raw amino-acid sequence, 195 residues long: MRGASYVRNTAETRISIDLFLDGKGVYDGTTGIGFLDHMFTLLARHGQLDLTIGCQGDLEVDTHHTVEDLGICLGNALAQALGDKKGICRYGHAYVPMDETLVRVCLDLSGRPFLVYKVKIPVERVGQLETEMVEEFFRALSNRAGMNLHIHLLEGGNGHHIIEAIFKAFGRALRQAVAIDPDNAGRVLSTKGVL.

The protein belongs to the imidazoleglycerol-phosphate dehydratase family.

It is found in the cytoplasm. It carries out the reaction D-erythro-1-(imidazol-4-yl)glycerol 3-phosphate = 3-(imidazol-4-yl)-2-oxopropyl phosphate + H2O. It functions in the pathway amino-acid biosynthesis; L-histidine biosynthesis; L-histidine from 5-phospho-alpha-D-ribose 1-diphosphate: step 6/9. The sequence is that of Imidazoleglycerol-phosphate dehydratase from Heliobacterium modesticaldum (strain ATCC 51547 / Ice1).